The chain runs to 86 residues: MKNLIAELLVKLAQKEEEAKELTVQVEALEIVVTALLRHMEHDAQQALIQDIEQAIDQVTPCPPVNDHDAMLLQQYLKKLLRHPRS.

Residues 1–38 are a coiled coil; sequence MKNLIAELLVKLAQKEEEAKELTVQVEALEIVVTALLR.

The protein belongs to the IraP family. As to quaternary structure, interacts with RssB.

The protein localises to the cytoplasm. Functionally, inhibits RpoS proteolysis by regulating RssB activity, thereby increasing the stability of the sigma stress factor RpoS especially during phosphate starvation, but also in stationary phase and during nitrogen starvation. Its effect on RpoS stability is due to its interaction with RssB, which probably blocks the interaction of RssB with RpoS, and the consequent delivery of the RssB-RpoS complex to the ClpXP protein degradation pathway. The protein is Anti-adapter protein IraP of Klebsiella pneumoniae subsp. pneumoniae (strain ATCC 700721 / MGH 78578).